A 413-amino-acid polypeptide reads, in one-letter code: THAP domain-containing protein 5 (413 aa).

The segment at 1–85 adopts a THAP-type zinc-finger fold; that stretch reads MPRYCAASYC…LKHTAVPTIF (85 aa). The interval 84-118 is disordered; sequence IFSSPDDEEKGSSQNSPQEIRREDQEETTKNVESK. A compositionally biased stretch (basic and acidic residues) spans 102–118; that stretch reads EIRREDQEETTKNVESK. Residues 375–399 are a coiled coil; that stretch reads RLRSLEALIGQLKQENLLSEEKLKI.

The protein localises to the nucleus. The protein is THAP domain-containing protein 5 (THAP5) of Gallus gallus (Chicken).